Here is a 249-residue protein sequence, read N- to C-terminus: Segregation and condensation protein A (249 aa).

Belongs to the ScpA family. In terms of assembly, component of a cohesin-like complex composed of ScpA, ScpB and the Smc homodimer, in which ScpA and ScpB bind to the head domain of Smc. The presence of the three proteins is required for the association of the complex with DNA.

Its subcellular location is the cytoplasm. Functionally, participates in chromosomal partition during cell division. May act via the formation of a condensin-like complex containing Smc and ScpB that pull DNA away from mid-cell into both cell halves. This is Segregation and condensation protein A from Listeria monocytogenes serotype 4a (strain HCC23).